Here is a 461-residue protein sequence, read N- to C-terminus: Ribitol-5-phosphate transferase FKTN (461 aa).

At 1-7 (MSRINKN) the chain is on the cytoplasmic side. Residues 6-27 (KNVVLALLTLTSSAFLLFQLYY) form a required and sufficient for interaction with POMGNT1 region. Residues 8 to 28 (VVLALLTLTSSAFLLFQLYYY) form a helical; Signal-anchor for type II membrane protein membrane-spanning segment. Residues 29 to 461 (KHYLSARNGP…SEWDEVIQLY (433 aa)) are Lumenal-facing. Asn-92 is a glycosylation site (N-linked (GlcNAc...) asparagine).

It belongs to the LicD transferase family. In terms of assembly, forms a complex composed of FKTN/fukutin, FKRP and RXYLT1/TMEM5. Interacts (via transmembrane domain) with POMGNT1; the interaction is direct and is required for normal POMGNT1 location in Golgi membranes. Expressed in the retina, with highest levels found in the inner segments of photoreceptors and the outer plexiform layer (at protein level). Expressed at lower levels in the inner and outer nuclear layers, the inner plexiform layers, and the ganglion cell layers of the retina (at protein level). Expressed in the heart, brain, spleen, lung, liver, skeletal muscle, kidney and testis.

The protein resides in the golgi apparatus membrane. It is found in the cytoplasm. Its subcellular location is the nucleus. It localises to the endoplasmic reticulum. It carries out the reaction 3-O-[beta-D-GalNAc-(1-&gt;3)-beta-D-GlcNAc-(1-&gt;4)-(O-6-P-alpha-D-Man)]-Thr-[protein] + CDP-L-ribitol = 3-O-[Rib-ol-P-3-beta-D-GalNAc-(1-&gt;3)-beta-D-GlcNAc-(1-&gt;4)-(O-6-P-alpha-D-Man)]-Thr-[protein] + CMP + H(+). It participates in protein modification; protein glycosylation. Its function is as follows. Catalyzes the transfer of CDP-ribitol to the distal N-acetylgalactosamine of the phosphorylated O-mannosyl trisaccharide (N-acetylgalactosamine-beta-3-N-acetylglucosamine-beta-4-(phosphate-6-)mannose), a carbohydrate structure present in alpha-dystroglycan (DAG1). This constitutes the first step in the formation of the ribitol 5-phosphate tandem repeat which links the phosphorylated O-mannosyl trisaccharide to the ligand binding moiety composed of repeats of 3-xylosyl-alpha-1,3-glucuronic acid-beta-1. Required for normal location of POMGNT1 in Golgi membranes, and for normal POMGNT1 activity. May interact with and reinforce a large complex encompassing the outside and inside of muscle membranes. Could be involved in brain development. The sequence is that of Ribitol-5-phosphate transferase FKTN from Mus musculus (Mouse).